The primary structure comprises 282 residues: MTNFSSSPPIAFGDLQGCHAAYRQLFAQLSPAADTPLWFAGDLVNRGPASLATLREIVGLGERAVAVLGNHDLHLLAVAAGIRTLKPGDTIGEILDAPDADDLIEWVRHRPFAHFERGMLMVHAGLLPQWDAALALELADELQRALRAPNWRDTLRGLYGNDPNCWSPDLKKADRLRVAFNAFTRIRFCTPEGAMEFRANGGPASAPAGYLPWFDAPSRKTADVTVVFGHWAALGLMLRENLVALDSGCVWGNRLSAVRLADDPAAREVAQVACERCGAAEE.

Belongs to the Ap4A hydrolase family.

The enzyme catalyses P(1),P(4)-bis(5'-adenosyl) tetraphosphate + H2O = 2 ADP + 2 H(+). In terms of biological role, hydrolyzes diadenosine 5',5'''-P1,P4-tetraphosphate to yield ADP. The chain is Bis(5'-nucleosyl)-tetraphosphatase, symmetrical from Burkholderia thailandensis (strain ATCC 700388 / DSM 13276 / CCUG 48851 / CIP 106301 / E264).